We begin with the raw amino-acid sequence, 388 residues long: MFSLRTAQPAQSLFRAATNTYSTSLPRSAIAARSFATVQSDIFKPTKYGGKYTVTLIPGDGIGTEVAESVKTIFKADNVPIEWEQVDVSGLDAGNKHSEDLFKESIASLKRNKLGLKGILHTPVERSGHQSFNVALRQELDIYASIVLIKNIPGYKTRHDNVDLCIIRENTEGEYSGLEHQSVSGVVESLKIITRAKSERIAKFAFSFALANNRKKVTCIHKANIMKLADGLFRSTFHKVAESYPTLETNDMIVDNASMQAVARPQQFDVMVMPNLYGGILSNVGAALVGGPGIVPGCNMGRDVAVFEPGCRHVGLDIKGKDQANPTALILSGSMLLRHLGLDEHANRISKAVYDVIGEGVTRTRDMGGQASTHEFTRAVLDKMESAL.

A mitochondrion-targeting transit peptide spans 1-35 (MFSLRTAQPAQSLFRAATNTYSTSLPRSAIAARSF). Substrate-binding residues include arginine 137, arginine 168, and aspartate 255. Aspartate 255 contributes to the Mg(2+) binding site.

This sequence belongs to the isocitrate and isopropylmalate dehydrogenases family. Octamer of two non-identical subunits IDH1 and IDH2. Mg(2+) serves as cofactor. Mn(2+) is required as a cofactor.

It is found in the mitochondrion. It catalyses the reaction D-threo-isocitrate + NAD(+) = 2-oxoglutarate + CO2 + NADH. Its function is as follows. Performs an essential role in the oxidative function of the citric acid cycle. The protein is Isocitrate dehydrogenase [NAD] subunit 1, mitochondrial (IDH1) of Ajellomyces capsulatus (Darling's disease fungus).